Here is a 1436-residue protein sequence, read N- to C-terminus: ABC transporter C family member 15 (1436 aa).

Transmembrane regions (helical) follow at residues 8–28 (IINK…IYLY), 129–149 (YIAT…PLIL), 165–185 (IYIG…NMAS), 238–258 (FFQY…IQIL), 261–281 (LGFL…VMLI), 349–369 (IIYW…VLVS), and 373–393 (TYTL…ITIL). Positions 128-412 (NYIATGLFVF…LPDCLHKFIS (285 aa)) constitute an ABC transmembrane type-1 1 domain. In terms of domain architecture, ABC transporter 1 spans 543 to 766 (ADYQDLLSIN…IDFEMILKEK (224 aa)). 575 to 582 (GGVRSGKT) is a binding site for ATP. Residues 865–1155 (KKYIRMGSSI…FMRQFGELES (291 aa)) form the ABC transmembrane type-1 2 domain. 6 helical membrane passes run 873-893 (SISF…ILLL), 919-939 (LIYL…YLLI), 985-1005 (IDIL…CLVT), 1017-1039 (IAIP…NYSV), 1101-1121 (IGIR…LFSI), and 1127-1147 (GLSA…NWFM). An ABC transporter 2 domain is found at 1193 to 1426 (IEFKNVEIRY…STSRFSKLIK (234 aa)). Position 1227–1234 (1227–1234 (GRSGSGKS)) interacts with ATP.

This sequence belongs to the ABC transporter superfamily. ABCC family. Conjugate transporter (TC 3.A.1.208) subfamily.

Its subcellular location is the membrane. The protein is ABC transporter C family member 15 (abcC15) of Dictyostelium discoideum (Social amoeba).